Reading from the N-terminus, the 100-residue chain is Small ribosomal subunit protein uS14 (100 aa).

Belongs to the universal ribosomal protein uS14 family. In terms of assembly, part of the 30S ribosomal subunit. Contacts proteins S3 and S10.

Functionally, binds 16S rRNA, required for the assembly of 30S particles and may also be responsible for determining the conformation of the 16S rRNA at the A site. This chain is Small ribosomal subunit protein uS14, found in Prochlorococcus marinus (strain NATL1A).